A 429-amino-acid chain; its full sequence is 26S proteasome regulatory subunit 6A homolog (429 aa).

Positions 1–21 (MSSPPPAAAAAMAVDDADDDQ) are disordered. 217 to 224 (GPPGTGKT) is a binding site for ATP.

Belongs to the AAA ATPase family.

It is found in the cytoplasm. The protein resides in the nucleus. In terms of biological role, the 26S proteasome is involved in the ATP-dependent degradation of ubiquitinated proteins. The regulatory (or ATPase) complex confers ATP dependency and substrate specificity to the 26S complex. This Oryza sativa subsp. japonica (Rice) protein is 26S proteasome regulatory subunit 6A homolog (TBP1).